A 193-amino-acid polypeptide reads, in one-letter code: LOB domain-containing protein 12 (193 aa).

In terms of domain architecture, LOB spans 7–108; the sequence is SPCASCKLLR…MQLAVAQAEI (102 aa).

Belongs to the LOB domain-containing protein family. As to expression, expressed predominantly in roots, and at low levels in shoots, floral stems and open flowers.

In Arabidopsis thaliana (Mouse-ear cress), this protein is LOB domain-containing protein 12 (LBD12).